A 613-amino-acid chain; its full sequence is Dihydroxy-acid dehydratase (613 aa).

D81 provides a ligand contact to Mg(2+). C122 provides a ligand contact to [2Fe-2S] cluster. Mg(2+) is bound by residues D123 and K124. K124 is subject to N6-carboxylysine. C197 serves as a coordination point for [2Fe-2S] cluster. E493 provides a ligand contact to Mg(2+). Catalysis depends on S519, which acts as the Proton acceptor.

The protein belongs to the IlvD/Edd family. Homodimer. Requires [2Fe-2S] cluster as cofactor. The cofactor is Mg(2+).

It carries out the reaction (2R)-2,3-dihydroxy-3-methylbutanoate = 3-methyl-2-oxobutanoate + H2O. The enzyme catalyses (2R,3R)-2,3-dihydroxy-3-methylpentanoate = (S)-3-methyl-2-oxopentanoate + H2O. It participates in amino-acid biosynthesis; L-isoleucine biosynthesis; L-isoleucine from 2-oxobutanoate: step 3/4. It functions in the pathway amino-acid biosynthesis; L-valine biosynthesis; L-valine from pyruvate: step 3/4. Functions in the biosynthesis of branched-chain amino acids. Catalyzes the dehydration of (2R,3R)-2,3-dihydroxy-3-methylpentanoate (2,3-dihydroxy-3-methylvalerate) into 2-oxo-3-methylpentanoate (2-oxo-3-methylvalerate) and of (2R)-2,3-dihydroxy-3-methylbutanoate (2,3-dihydroxyisovalerate) into 2-oxo-3-methylbutanoate (2-oxoisovalerate), the penultimate precursor to L-isoleucine and L-valine, respectively. The chain is Dihydroxy-acid dehydratase from Corynebacterium glutamicum (strain R).